We begin with the raw amino-acid sequence, 340 residues long: Lipase chaperone (340 aa).

A helical transmembrane segment spans residues 4-24; the sequence is ILLLIPLAFAASLAWFVWLEP. A disordered region spans residues 29–51; that stretch reads ETAPPASPQAGADRAPPAASAGE. Residues 36–51 show a composition bias toward low complexity; it reads PQAGADRAPPAASAGE.

This sequence belongs to the lipase chaperone family.

The protein resides in the cell inner membrane. May be involved in the folding of the extracellular lipase during its passage through the periplasm. The polypeptide is Lipase chaperone (lifO) (Pseudomonas aeruginosa (strain ATCC 15692 / DSM 22644 / CIP 104116 / JCM 14847 / LMG 12228 / 1C / PRS 101 / PAO1)).